Here is an 81-residue protein sequence, read N- to C-terminus: ATP synthase subunit c, chloroplastic (81 aa).

The next 2 helical transmembrane spans lie at 3–23 and 57–77; these read PIIS…ASIG and LAFM…LLFA.

This sequence belongs to the ATPase C chain family. F-type ATPases have 2 components, F(1) - the catalytic core - and F(0) - the membrane proton channel. F(1) has five subunits: alpha(3), beta(3), gamma(1), delta(1), epsilon(1). F(0) has four main subunits: a(1), b(1), b'(1) and c(10-14). The alpha and beta chains form an alternating ring which encloses part of the gamma chain. F(1) is attached to F(0) by a central stalk formed by the gamma and epsilon chains, while a peripheral stalk is formed by the delta, b and b' chains.

It is found in the plastid. The protein resides in the chloroplast thylakoid membrane. In terms of biological role, f(1)F(0) ATP synthase produces ATP from ADP in the presence of a proton or sodium gradient. F-type ATPases consist of two structural domains, F(1) containing the extramembraneous catalytic core and F(0) containing the membrane proton channel, linked together by a central stalk and a peripheral stalk. During catalysis, ATP synthesis in the catalytic domain of F(1) is coupled via a rotary mechanism of the central stalk subunits to proton translocation. Functionally, key component of the F(0) channel; it plays a direct role in translocation across the membrane. A homomeric c-ring of between 10-14 subunits forms the central stalk rotor element with the F(1) delta and epsilon subunits. The chain is ATP synthase subunit c, chloroplastic from Cicer arietinum (Chickpea).